The primary structure comprises 213 residues: Orotate phosphoribosyltransferase (213 aa).

A 5-phospho-alpha-D-ribose 1-diphosphate-binding site is contributed by Lys-26. 34-35 (FF) contacts orotate. Residues 72-73 (YK), Arg-98, Lys-99, Lys-102, and 123-131 (DDVISAGTS) each bind 5-phospho-alpha-D-ribose 1-diphosphate. 2 residues coordinate orotate: Ser-127 and Arg-155.

Belongs to the purine/pyrimidine phosphoribosyltransferase family. PyrE subfamily. As to quaternary structure, homodimer. Requires Mg(2+) as cofactor.

It carries out the reaction orotidine 5'-phosphate + diphosphate = orotate + 5-phospho-alpha-D-ribose 1-diphosphate. The protein operates within pyrimidine metabolism; UMP biosynthesis via de novo pathway; UMP from orotate: step 1/2. Catalyzes the transfer of a ribosyl phosphate group from 5-phosphoribose 1-diphosphate to orotate, leading to the formation of orotidine monophosphate (OMP). This chain is Orotate phosphoribosyltransferase, found in Neisseria gonorrhoeae (strain NCCP11945).